The primary structure comprises 414 residues: Ankyrin repeat domain-containing protein 10 (414 aa).

ANK repeat units follow at residues 18-47 (TLRF…RSDL), 54-83 (YGWT…SVNA), 88-117 (FAQT…NINK), 121-150 (VGET…QIDL), and 154-187 (SGLT…RYYS). The segment at 310–332 (GVTSPSRHRIHTSNGTEEPEKAM) is disordered.

The polypeptide is Ankyrin repeat domain-containing protein 10 (ANKRD10) (Gallus gallus (Chicken)).